Reading from the N-terminus, the 328-residue chain is Protease HtpX homolog (328 aa).

2 helical membrane passes run Thr-6–Gly-26 and Ser-28–Ser-48. A Zn(2+)-binding site is contributed by His-130. Glu-131 is an active-site residue. A Zn(2+)-binding site is contributed by His-134. The next 2 helical transmembrane spans lie at Ile-145–Gly-165 and Pro-172–Val-192. Residue Glu-201 participates in Zn(2+) binding. The tract at residues Gln-279 to Ser-328 is disordered. Residues Ser-287–Pro-299 are compositionally biased toward low complexity.

The protein belongs to the peptidase M48B family. Zn(2+) serves as cofactor.

It localises to the cell inner membrane. The protein is Protease HtpX homolog of Rhizobium rhizogenes (strain K84 / ATCC BAA-868) (Agrobacterium radiobacter).